A 58-amino-acid polypeptide reads, in one-letter code: Potassium channel toxin alpha-KTx 9.9 (58 aa).

The first 21 residues, 1–21 (KKTSRLFTLVLIVLAMNVMMA), serve as a signal peptide directing secretion. Positions 22–30 (IISDPVVEA) are excised as a propeptide. Disulfide bonds link C33–C49, C36–C54, and C40–C56.

Belongs to the short scorpion toxin superfamily. Potassium channel inhibitor family. Alpha-KTx 09 subfamily. Expressed by the venom gland.

It is found in the secreted. Functionally, potassium channel inhibitor. This is Potassium channel toxin alpha-KTx 9.9 from Buthus israelis (Israeli scorpion).